A 319-amino-acid polypeptide reads, in one-letter code: Ribosomal RNA small subunit methyltransferase H (319 aa).

Residues 39 to 41, aspartate 59, phenylalanine 83, aspartate 104, and glutamine 111 contribute to the S-adenosyl-L-methionine site; that span reads GGH.

The protein belongs to the methyltransferase superfamily. RsmH family.

The protein localises to the cytoplasm. The enzyme catalyses cytidine(1402) in 16S rRNA + S-adenosyl-L-methionine = N(4)-methylcytidine(1402) in 16S rRNA + S-adenosyl-L-homocysteine + H(+). Its function is as follows. Specifically methylates the N4 position of cytidine in position 1402 (C1402) of 16S rRNA. In Ralstonia pickettii (strain 12J), this protein is Ribosomal RNA small subunit methyltransferase H.